The primary structure comprises 331 residues: Phosphoribosylformylglycinamidine cyclo-ligase (331 aa).

This sequence belongs to the AIR synthase family.

It is found in the cytoplasm. The enzyme catalyses 2-formamido-N(1)-(5-O-phospho-beta-D-ribosyl)acetamidine + ATP = 5-amino-1-(5-phospho-beta-D-ribosyl)imidazole + ADP + phosphate + H(+). It participates in purine metabolism; IMP biosynthesis via de novo pathway; 5-amino-1-(5-phospho-D-ribosyl)imidazole from N(2)-formyl-N(1)-(5-phospho-D-ribosyl)glycinamide: step 2/2. This is Phosphoribosylformylglycinamidine cyclo-ligase from Clostridium kluyveri (strain NBRC 12016).